The sequence spans 326 residues: MDIIHDNAADLSALNGKTVAVIGYGAQGRAQALCMRDSGVNVIIGVRPGKSFDAAAQDGFQVMSVAEAAEKADIIHILLPDESHGAVYEAEIKPHLKAGKTLCCSHGFAYVFNTIVPPADVDVIMVAPKGPGTEVRRVFEEGFGCPGLIAVHQNPSGKARDVALAMAKAEGLTRGGVLECTMAQETYEDLFGEQNVLCGGLVDLMKYGFETLTEAGYPPEMAYFECVHEAKLIVDLIYNGGIQKMNSVISNTAEFGEYYNGPQILPAEVKERMKESLKRIESGKFAKDWLEEAAKGAPNLKAKREALGQHPVEIVGAKIRSLFERN.

The 180-residue stretch at 1-180 folds into the KARI N-terminal Rossmann domain; that stretch reads MDIIHDNAAD…GLTRGGVLEC (180 aa). NADP(+) contacts are provided by residues 24-27, arginine 47, and serine 51; that span reads YGAQ. The active site involves histidine 106. Glycine 132 serves as a coordination point for NADP(+). The KARI C-terminal knotted domain maps to 181-326; sequence TMAQETYEDL…AKIRSLFERN (146 aa). Aspartate 189, glutamate 193, glutamate 225, and glutamate 229 together coordinate Mg(2+). Serine 250 is a binding site for substrate.

This sequence belongs to the ketol-acid reductoisomerase family. Mg(2+) is required as a cofactor.

It carries out the reaction (2R)-2,3-dihydroxy-3-methylbutanoate + NADP(+) = (2S)-2-acetolactate + NADPH + H(+). It catalyses the reaction (2R,3R)-2,3-dihydroxy-3-methylpentanoate + NADP(+) = (S)-2-ethyl-2-hydroxy-3-oxobutanoate + NADPH + H(+). It functions in the pathway amino-acid biosynthesis; L-isoleucine biosynthesis; L-isoleucine from 2-oxobutanoate: step 2/4. It participates in amino-acid biosynthesis; L-valine biosynthesis; L-valine from pyruvate: step 2/4. Its function is as follows. Involved in the biosynthesis of branched-chain amino acids (BCAA). Catalyzes an alkyl-migration followed by a ketol-acid reduction of (S)-2-acetolactate (S2AL) to yield (R)-2,3-dihydroxy-isovalerate. In the isomerase reaction, S2AL is rearranged via a Mg-dependent methyl migration to produce 3-hydroxy-3-methyl-2-ketobutyrate (HMKB). In the reductase reaction, this 2-ketoacid undergoes a metal-dependent reduction by NADPH to yield (R)-2,3-dihydroxy-isovalerate. This Akkermansia muciniphila (strain ATCC BAA-835 / DSM 22959 / JCM 33894 / BCRC 81048 / CCUG 64013 / CIP 107961 / Muc) protein is Ketol-acid reductoisomerase (NADP(+)).